The following is a 102-amino-acid chain: Monothiol glutaredoxin-S4 (102 aa).

The region spanning 1–101 (MDKLQKMISE…PMLKRVGALW (101 aa)) is the Glutaredoxin domain. Cys-21 is a binding site for [2Fe-2S] cluster. Positions 99–102 (ALWL) match the Responsive for interaction with TGA factors motif.

Belongs to the glutaredoxin family. CC-type subfamily.

Its subcellular location is the cytoplasm. The protein localises to the nucleus. Its function is as follows. May only reduce GSH-thiol disulfides, but not protein disulfides. The polypeptide is Monothiol glutaredoxin-S4 (GRXS4) (Arabidopsis thaliana (Mouse-ear cress)).